Consider the following 396-residue polypeptide: Tyrosine--tRNA ligase (396 aa).

The 'HIGH' region signature appears at 43 to 52 (PSSPDIHLGH). A 'KMSKS' region motif is present at residues 227-231 (KMSKS). K230 provides a ligand contact to ATP. An S4 RNA-binding domain is found at 338–396 (ICVIDFIIKADLAKSKSEARRLLEQGGVEINSAKISDPGTTVKCGDIIKAGKRRYSKAV).

It belongs to the class-I aminoacyl-tRNA synthetase family. TyrS type 2 subfamily. In terms of assembly, homodimer.

Its subcellular location is the cytoplasm. It catalyses the reaction tRNA(Tyr) + L-tyrosine + ATP = L-tyrosyl-tRNA(Tyr) + AMP + diphosphate + H(+). Functionally, catalyzes the attachment of tyrosine to tRNA(Tyr) in a two-step reaction: tyrosine is first activated by ATP to form Tyr-AMP and then transferred to the acceptor end of tRNA(Tyr). This Dehalococcoides mccartyi (strain ATCC BAA-2266 / KCTC 15142 / 195) (Dehalococcoides ethenogenes (strain 195)) protein is Tyrosine--tRNA ligase.